The following is a 186-amino-acid chain: Peptidoglycan-recognition protein SD (186 aa).

The N-terminal stretch at 1–18 is a signal peptide; that stretch reads MTWIGLLIVGLTAIAVQG. Residues 47–169 form the N-acetylmuramoyl-L-alanine amidase domain; it reads AVIAHTAGGA…RQVSATKSPG (123 aa). C57 and C63 are disulfide-bonded. N-linked (GlcNAc...) asparagine glycosylation occurs at N181.

This sequence belongs to the N-acetylmuramoyl-L-alanine amidase 2 family. As to expression, in larvae, it is mainly expressed in fat body. Also expressed in uninduced hemocytes and mbn-2 cells.

It is found in the secreted. Functionally, peptidoglycan-recognition protein that plays a key role in innate immunity by binding to peptidoglycans (PGN) of Gram-positive bacteria and activating the Toll pathway. Has no activity against on Gram-negative bacteria and fungi. Shows some partial redundancy with PRPGP-SA in Gram-positive bacteria recognition. May act by activating the proteolytic cleavage of Spatzle and the subsequent activation of Toll pathway. Recognizes S.aureus PGN. The chain is Peptidoglycan-recognition protein SD (PGRP-SD) from Drosophila melanogaster (Fruit fly).